The chain runs to 492 residues: Pre-mRNA-splicing factor sap61 (492 aa).

The C2H2-type zinc finger occupies 243-267; that stretch reads FYCEVCQKFFGKITVFEAHKKSKAH. Disordered regions lie at residues 268–291 and 337–365; these read NKAVKRMQSSSPSTTSNTNEKQKG and AAEREAFEQSTPSVSVEGNQDEESDQDDE. The span at 276-286 shows a compositional bias: low complexity; it reads SSSPSTTSNTN. Polar residues predominate over residues 345–354; sequence QSTPSVSVEG. Residues 355–365 show a composition bias toward acidic residues; it reads NQDEESDQDDE. A Phosphoserine modification is found at Ser-360. The segment at 397–428 adopts a Matrin-type zinc-finger fold; that stretch reads FPCEICGNYVYMGRKAFDKHFTEQRHIYGLKC.

Belongs to the SF3A3 family. Belongs to the 40S cdc5-associated complex (or cwf complex), a spliceosome sub-complex reminiscent of a late-stage spliceosome composed of the U2, U5 and U6 snRNAs and at least brr2, cdc5, cwf2/prp3, cwf3/syf1, cwf4/syf3, cwf5/ecm2, spp42/cwf6, cwf7/spf27, cwf8, cwf9, cwf10, cwf11, cwf12, prp45/cwf13, cwf14, cwf15, cwf16, cwf17, cwf18, cwf19, cwf20, cwf21, cwf22, cwf23, cwf24, cwf25, cwf26, cyp7/cwf27, cwf28, cwf29/ist3, lea1, msl1, prp5/cwf1, prp10, prp12/sap130, prp17, prp22, sap61, sap62, sap114, sap145, slu7, smb1, smd1, smd3, smf1, smg1 and syf2.

It localises to the nucleus. Its subcellular location is the cytoplasm. In terms of biological role, involved in mRNA splicing where it associates with cdc5 and the other cwf proteins as part of the spliceosome. This Schizosaccharomyces pombe (strain 972 / ATCC 24843) (Fission yeast) protein is Pre-mRNA-splicing factor sap61 (sap61).